Reading from the N-terminus, the 475-residue chain is Ankyrin repeat, SAM and basic leucine zipper domain-containing protein 1 (475 aa).

A disordered region spans residues 1-25 (MAAGTLRGLAVAGGGESSDSEDDGW). Residues Ser17, Ser18, and Ser20 each carry the phosphoserine modification. 6 ANK repeats span residues 45–74 (EKNE…NVDS), 78–107 (YGWT…NASF), 110–144 (DKLT…DPNT), 148–177 (RLMT…EVNA), 181–210 (NGYT…NKML), and 214–243 (DGRT…PLEG). In terms of domain architecture, SAM spans 272–334 (PYTAFGDLEI…KILAALKELE (63 aa)).

In terms of assembly, interacts with DDX4, PIWIL1, RANBP9 and TDRD1. As to expression, expressed exclusively in testis and ovary with higher levels in testis.

It is found in the cytoplasm. Plays a central role during spermatogenesis by repressing transposable elements and preventing their mobilization, which is essential for the germline integrity. Acts via the piRNA metabolic process, which mediates the repression of transposable elements during meiosis by forming complexes composed of piRNAs and Piwi proteins and governs the methylation and subsequent repression of transposons. Its association with pi-bodies suggests a participation in the primary piRNAs metabolic process. Required prior to the pachytene stage to facilitate the production of multiple types of piRNAs, including those associated with repeats involved in regulation of retrotransposons. May act by mediating protein-protein interactions during germ cell maturation. The polypeptide is Ankyrin repeat, SAM and basic leucine zipper domain-containing protein 1 (Mus musculus (Mouse)).